We begin with the raw amino-acid sequence, 247 residues long: Uracil-DNA glycosylase (247 aa).

The active-site Proton acceptor is the Asp83.

This sequence belongs to the uracil-DNA glycosylase (UDG) superfamily. UNG family.

Its subcellular location is the cytoplasm. The catalysed reaction is Hydrolyzes single-stranded DNA or mismatched double-stranded DNA and polynucleotides, releasing free uracil.. Its function is as follows. Excises uracil residues from the DNA which can arise as a result of misincorporation of dUMP residues by DNA polymerase or due to deamination of cytosine. The chain is Uracil-DNA glycosylase from Deinococcus radiodurans (strain ATCC 13939 / DSM 20539 / JCM 16871 / CCUG 27074 / LMG 4051 / NBRC 15346 / NCIMB 9279 / VKM B-1422 / R1).